The sequence spans 198 residues: Copy number protein (198 aa).

It is found in the cell membrane. Involved in copy number control of pIP404. This basic and hydrophobic protein may exert its effect from the cytoplasmic membrane. In Clostridium perfringens, this protein is Copy number protein (cop).